Consider the following 543-residue polypeptide: uncharacterized protein (543 aa).

A run of 6 helical transmembrane segments spans residues 47–67, 79–99, 126–146, 176–196, 198–218, and 249–269; these read FSLL…PSLV, GGMV…AFAL, AFLS…GFAS, IYVA…KFLA, FSSF…ISLA, and FILC…CATI. Asn275 carries N-linked (GlcNAc...) asparagine glycosylation. A run of 3 helical transmembrane segments spans residues 282-302, 335-355, and 384-404; these read IAII…MITI, AVGV…ALCL, and IPLN…LLML. N-linked (GlcNAc...) asparagine glycosylation occurs at Asn406. Transmembrane regions (helical) follow at residues 410–430, 452–472, and 480–500; these read ISSI…LPLV, ISIV…FPSY, and MNWA…YYYL. An N-linked (GlcNAc...) asparagine glycan is attached at Asn519.

Belongs to the amino acid-polyamine-organocation (APC) superfamily.

It localises to the membrane. This is an uncharacterized protein from Schizosaccharomyces pombe (strain 972 / ATCC 24843) (Fission yeast).